The sequence spans 514 residues: Maturase K (514 aa).

Belongs to the intron maturase 2 family. MatK subfamily.

The protein resides in the plastid. It localises to the chloroplast. Usually encoded in the trnK tRNA gene intron. Probably assists in splicing its own and other chloroplast group II introns. This Erythronium grandiflorum (Yellow avalanche-lily) protein is Maturase K.